The following is a 386-amino-acid chain: Patatin-14 (386 aa).

Positions 1 to 23 (MATTKSFLILFFMILATTSSTCA) are cleaved as a signal peptide. In terms of domain architecture, PNPLA spans 32 to 229 (LSIDGGGIKG…TVGDPALLSL (198 aa)). The GXGXXG motif lies at 36–41 (GGGIKG). The GXSXG motif lies at 75 to 79 (GTSTG). The active-site Nucleophile is the Ser-77. Residue Asn-115 is glycosylated (N-linked (GlcNAc...) asparagine). The active-site Proton acceptor is the Asp-215. The DGA/G motif lies at 215 to 217 (DGG). Residues 321–381 (ENALTGTTTE…LLSDRKKLRA (61 aa)) are a coiled coil.

This sequence belongs to the patatin family. In terms of tissue distribution, tuber.

Its subcellular location is the vacuole. Its function is as follows. Probable lipolytic acyl hydrolase (LAH), an activity which is thought to be involved in the response of tubers to pathogens. In Solanum tuberosum (Potato), this protein is Patatin-14.